Here is a 663-residue protein sequence, read N- to C-terminus: 4-hydroxy-3-methylbut-2-en-1-yl diphosphate synthase (flavodoxin) (663 aa).

Residues Cys-568, Cys-571, Cys-602, and Glu-609 each contribute to the [4Fe-4S] cluster site.

The protein belongs to the IspG family. The cofactor is [4Fe-4S] cluster.

It catalyses the reaction (2E)-4-hydroxy-3-methylbut-2-enyl diphosphate + oxidized [flavodoxin] + H2O + 2 H(+) = 2-C-methyl-D-erythritol 2,4-cyclic diphosphate + reduced [flavodoxin]. Its pathway is isoprenoid biosynthesis; isopentenyl diphosphate biosynthesis via DXP pathway; isopentenyl diphosphate from 1-deoxy-D-xylulose 5-phosphate: step 5/6. Converts 2C-methyl-D-erythritol 2,4-cyclodiphosphate (ME-2,4cPP) into 1-hydroxy-2-methyl-2-(E)-butenyl 4-diphosphate. This Leptospira borgpetersenii serovar Hardjo-bovis (strain JB197) protein is 4-hydroxy-3-methylbut-2-en-1-yl diphosphate synthase (flavodoxin).